The sequence spans 661 residues: MEVSSRIKELREEMQKHDYHYYILDAPLISDSGYDRLMQELKKLEEEYPQYITADSPTQRVAGKASEKFSPVRHRFPLLSLDNAFSYQDLLEFDRRIGRVARTLSYMAELKIDGVSIALVYENGVLLNAATRGDGLVGEDVTANIRTIKTIPLRLRHSLPRLEVRGEVFMPKQEFIRLNEEKEEKGERVFANPRNAAAGSLRQLDPRVTAGRALSAFVYDIIYMEGQTLAEQQEAWHFMQELGLPVNPEVRFCADINAVLAFTEEYAEKRHELPYEIDGVVVKLNTLAEREELGATARSPRWAMAYKFPAEEKETRLLGVEINVGRTGIIAPTALLEPVFLAGTTVSRASMHNFDLIKEKDLRIGDMVLLHKAGDIIPEIIASLPEKRSGEERVITPPENCPACDSKVARFAGEVAYRCENINCPARLKESLIFFASRGAMDIDGLGSAVIEQLVNKDMVKRIDDLYRLREEEITALERMGPKSAANLIKAINESKSRPLSRLLTALGIRHIGARSAKILSRHIHDIDDFYKLGVENLTSIPEIGPKMAESMVNFFAEPRNRETIEDLKDLGVNTREEAIEAGEQLLQGKTFVLTGTLPSLTRQQASEMIESRGGKVSSSVSKKTSYVVAGDDPGSKLDKALQLELTILDEAGFLNLLGLS.

NAD(+) contacts are provided by residues 31-35 (DSGYD), 80-81 (SL), and Glu-109. The active-site N6-AMP-lysine intermediate is the Lys-111. NAD(+) contacts are provided by Arg-132, Glu-167, Lys-283, and Lys-307. Cys-401, Cys-404, Cys-419, and Cys-424 together coordinate Zn(2+). The region spanning 582-661 (AGEQLLQGKT…AGFLNLLGLS (80 aa)) is the BRCT domain.

Belongs to the NAD-dependent DNA ligase family. LigA subfamily. It depends on Mg(2+) as a cofactor. The cofactor is Mn(2+).

It carries out the reaction NAD(+) + (deoxyribonucleotide)n-3'-hydroxyl + 5'-phospho-(deoxyribonucleotide)m = (deoxyribonucleotide)n+m + AMP + beta-nicotinamide D-nucleotide.. Its function is as follows. DNA ligase that catalyzes the formation of phosphodiester linkages between 5'-phosphoryl and 3'-hydroxyl groups in double-stranded DNA using NAD as a coenzyme and as the energy source for the reaction. It is essential for DNA replication and repair of damaged DNA. This is DNA ligase from Syntrophomonas wolfei subsp. wolfei (strain DSM 2245B / Goettingen).